A 321-amino-acid polypeptide reads, in one-letter code: uncharacterized protein (321 aa).

The 56-residue stretch at M1–K56 folds into the HTH lacI-type domain. A DNA-binding region (H-T-H motif) is located at residues I4 to N23.

This is an uncharacterized protein from Bacillus subtilis (strain 168).